We begin with the raw amino-acid sequence, 292 residues long: NAD kinase (292 aa).

Catalysis depends on D73, which acts as the Proton acceptor. NAD(+)-binding positions include 73–74, 147–148, H158, R175, D177, 188–193, and Q247; these read DG, NE, and TAYSLS.

It belongs to the NAD kinase family. It depends on a divalent metal cation as a cofactor.

Its subcellular location is the cytoplasm. The catalysed reaction is NAD(+) + ATP = ADP + NADP(+) + H(+). Its function is as follows. Involved in the regulation of the intracellular balance of NAD and NADP, and is a key enzyme in the biosynthesis of NADP. Catalyzes specifically the phosphorylation on 2'-hydroxyl of the adenosine moiety of NAD to yield NADP. The polypeptide is NAD kinase (Shigella dysenteriae serotype 1 (strain Sd197)).